Here is a 147-residue protein sequence, read N- to C-terminus: Large ribosomal subunit protein uL15 (147 aa).

The interval 1–47 is disordered; it reads MKLHELKPAEGAVRAKRRLGRGTATGQGKTAGRGQKGQWSRSGGGVR. Residues 23–35 are compositionally biased toward gly residues; sequence TATGQGKTAGRGQ.

This sequence belongs to the universal ribosomal protein uL15 family. Part of the 50S ribosomal subunit.

Functionally, binds to the 23S rRNA. The protein is Large ribosomal subunit protein uL15 of Clostridioides difficile (strain 630) (Peptoclostridium difficile).